Reading from the N-terminus, the 200-residue chain is Early E1A 21 kDa protein (200 aa).

A disordered region spans residues 78–98 (QDSTTATSAEEPSASTDSISS). An LXCXE motif, interaction with host RB1 motif is present at residues 114 to 118 (LRCYE). Residues 136–151 (CSTCGGHEVNGFCSLC) fold into a zinc finger. The Nuclear localization signal signature appears at 196–200 (SRHDE).

In terms of assembly, interaction with host RB1 induces the aberrant dissociation of RB1-E2F1 complex thereby disrupting RB1's activity.

E1A protein has both transforming and trans-activating activities. Plays a role in viral genome replication by driving entry of quiescent cells into the cell cycle. Disrupts the function of host retinoblastoma protein RB1/pRb and isoform early E1A 26 kDa protein stabilizes TP53, which are key regulators of the cell cycle. Induces the disassembly of the E2F1 transcription factors from RB1 by direct competition for the same binding site on RB1, with subsequent transcriptional activation of E2F1-regulated S-phase genes. Inactivation of the ability of RB1 to arrest the cell cycle is critical for cellular transformation, uncontrolled cellular growth and proliferation induced by viral infection. Stimulation of progression from G1 to S phase allows the virus to efficiently use the cellular DNA replicating machinery to achieve viral genome replication. This chain is Early E1A 21 kDa protein, found in Murine adenovirus A serotype 1 (MAdV-1).